Consider the following 154-residue polypeptide: Deoxyuridine 5'-triphosphate nucleotidohydrolase (154 aa).

Substrate is bound by residues 64 to 66 (RSG), asparagine 77, 81 to 83 (TVD), and lysine 91.

It belongs to the dUTPase family. Homotrimer. Requires Mg(2+) as cofactor.

It catalyses the reaction dUTP + H2O = dUMP + diphosphate + H(+). Its pathway is pyrimidine metabolism; dUMP biosynthesis; dUMP from dCTP (dUTP route): step 2/2. Functionally, this enzyme is involved in nucleotide metabolism: it produces dUMP, the immediate precursor of thymidine nucleotides and it decreases the intracellular concentration of dUTP so that uracil cannot be incorporated into DNA. The polypeptide is Deoxyuridine 5'-triphosphate nucleotidohydrolase (Mycolicibacterium gilvum (strain PYR-GCK) (Mycobacterium gilvum (strain PYR-GCK))).